The sequence spans 335 residues: Transcription factor IIIA (335 aa).

9 consecutive C2H2-type zinc fingers follow at residues 13–37 (YICS…LCKH), 43–67 (FPCT…SMTH), 73–98 (CKCD…QRAH), 105–129 (YECY…QYIH), 135–159 (FKCN…EKVH), 162–188 (YPCQ…AASH), 192–214 (TICD…KRTH), 221–246 (YKCP…LSFH), and 252–276 (FACG…ANTH). Positions 269 to 280 (LDRHANTHDPEK) are enriched in basic and acidic residues. Positions 269–335 (LDRHANTHDP…ATAMQNLSIK (67 aa)) are disordered. The segment covering 281-292 (KKMKKPRPKKSL) has biased composition (basic residues).

It is found in the nucleus. Functionally, involved in ribosomal large subunit biogenesis. Interacts with the internal control region (ICR) of approximately 50 bases within the 5S RNA genes, is required for correct transcription of these genes by RNA polymerase III. Also binds the transcribed 5S RNA's. This chain is Transcription factor IIIA (gtf3a), found in Lithobates pipiens (Northern leopard frog).